The following is a 338-amino-acid chain: Ketol-acid reductoisomerase (NADP(+)) (338 aa).

The KARI N-terminal Rossmann domain maps to 1–181; it reads MKVFYDKDCD…GGGKAGIIET (181 aa). NADP(+) is bound by residues 24-27, arginine 47, and serine 52; that span reads YGSQ. Histidine 107 is an active-site residue. Glycine 133 contacts NADP(+). In terms of domain architecture, KARI C-terminal knotted spans 182 to 327; the sequence is NFKEETETDL…AQLRAMMPWI (146 aa). Aspartate 190, glutamate 194, glutamate 226, and glutamate 230 together coordinate Mg(2+). Serine 251 serves as a coordination point for substrate.

This sequence belongs to the ketol-acid reductoisomerase family. Requires Mg(2+) as cofactor.

The enzyme catalyses (2R)-2,3-dihydroxy-3-methylbutanoate + NADP(+) = (2S)-2-acetolactate + NADPH + H(+). The catalysed reaction is (2R,3R)-2,3-dihydroxy-3-methylpentanoate + NADP(+) = (S)-2-ethyl-2-hydroxy-3-oxobutanoate + NADPH + H(+). The protein operates within amino-acid biosynthesis; L-isoleucine biosynthesis; L-isoleucine from 2-oxobutanoate: step 2/4. It functions in the pathway amino-acid biosynthesis; L-valine biosynthesis; L-valine from pyruvate: step 2/4. Functionally, involved in the biosynthesis of branched-chain amino acids (BCAA). Catalyzes an alkyl-migration followed by a ketol-acid reduction of (S)-2-acetolactate (S2AL) to yield (R)-2,3-dihydroxy-isovalerate. In the isomerase reaction, S2AL is rearranged via a Mg-dependent methyl migration to produce 3-hydroxy-3-methyl-2-ketobutyrate (HMKB). In the reductase reaction, this 2-ketoacid undergoes a metal-dependent reduction by NADPH to yield (R)-2,3-dihydroxy-isovalerate. This chain is Ketol-acid reductoisomerase (NADP(+)), found in Paracidovorax citrulli (strain AAC00-1) (Acidovorax citrulli).